The primary structure comprises 294 residues: Phosphoribosylaminoimidazole-succinocarboxamide synthase (294 aa).

Belongs to the SAICAR synthetase family.

The catalysed reaction is 5-amino-1-(5-phospho-D-ribosyl)imidazole-4-carboxylate + L-aspartate + ATP = (2S)-2-[5-amino-1-(5-phospho-beta-D-ribosyl)imidazole-4-carboxamido]succinate + ADP + phosphate + 2 H(+). The protein operates within purine metabolism; IMP biosynthesis via de novo pathway; 5-amino-1-(5-phospho-D-ribosyl)imidazole-4-carboxamide from 5-amino-1-(5-phospho-D-ribosyl)imidazole-4-carboxylate: step 1/2. This chain is Phosphoribosylaminoimidazole-succinocarboxamide synthase, found in Rhodococcus opacus (strain B4).